The primary structure comprises 95 residues: Toxin Tbo-IT2 (95 aa).

An N-terminal signal peptide occupies residues 1-23; that stretch reads MTMKTLCLSLIVIGVLILVAVKA. Residues 24-53 constitute a propeptide that is removed on maturation; the sequence is EDYVNINSLEEAPEENVNINNLEETPEESR. Cystine bridges form between Cys54–Cys68, Cys61–Cys73, Cys67–Cys84, Cys70–Cys92, and Cys75–Cys82. Position 92 is a cysteine amide (Cys92).

This sequence belongs to the neurotoxin 02 (plectoxin) family. 02 (plectoxin) subfamily. Expressed by the venom gland.

The protein resides in the secreted. This recombinant (non-amidated) toxin shows insecticidal activity on larvae of the housefly Musca domestica and has no activity on a panel of expressed neuronal receptors and ion channels. This Tibellus oblongus (Oblong running crab spider) protein is Toxin Tbo-IT2.